The following is a 342-amino-acid chain: Succinylglutamate desuccinylase (342 aa).

Residues H63, E66, and H159 each contribute to the Zn(2+) site. The active site involves E222.

It belongs to the AspA/AstE family. Succinylglutamate desuccinylase subfamily. The cofactor is Zn(2+).

The catalysed reaction is N-succinyl-L-glutamate + H2O = L-glutamate + succinate. It functions in the pathway amino-acid degradation; L-arginine degradation via AST pathway; L-glutamate and succinate from L-arginine: step 5/5. Transforms N(2)-succinylglutamate into succinate and glutamate. This chain is Succinylglutamate desuccinylase, found in Paraburkholderia xenovorans (strain LB400).